A 435-amino-acid polypeptide reads, in one-letter code: MQVSVESTQGLERKLTVTIAAEAFDKEYNSRVHHLAKTQRVDGFRPGKVPTSVVTKRFGAGIFQEVAGELMQRNFSEAVMAEKLNLAARPNFEPQAREKGQDFTFTATFEVYPEVTLSPLEALSIEKDSAEVTDADLDKMIETLRKQHAEWNAVEREAANDDQVTLDFEGSIDGEVFEGGKAEGFDIVLGSGKMIPGFEAGIVGHAAGSEFTIDVNFPEDYHAEQLKGKAVQFAIKLTKVEEQILPEITPEFVQKFGVENGELETLKHDIKQNMVRELSQALKNSAKDKVLNALVENNEIEIPKALVEDEIVVLRKQAMERYAKEMDPENLPELPAELFKEQAEKRVKVGFLLGEVINVNELTVDQEKVAALIESAASAYDNPAEVIAYYKNNKEMMQNMENVALEEQAVDFIIEKAKVTEVNKSFDEVMNKVVA.

The PPIase FKBP-type domain occupies 161–246 (DDQVTLDFEG…LTKVEEQILP (86 aa)).

It belongs to the FKBP-type PPIase family. Tig subfamily.

It localises to the cytoplasm. It carries out the reaction [protein]-peptidylproline (omega=180) = [protein]-peptidylproline (omega=0). Its function is as follows. Involved in protein export. Acts as a chaperone by maintaining the newly synthesized protein in an open conformation. Functions as a peptidyl-prolyl cis-trans isomerase. This chain is Trigger factor, found in Psychromonas ingrahamii (strain DSM 17664 / CCUG 51855 / 37).